A 745-amino-acid polypeptide reads, in one-letter code: Capsid protein (745 aa).

Disordered regions lie at residues 23-44 (RRPLRRRRAGRPARRYRRRRTV), 598-619 (PCKTDGRPTDSDRHPRGIQVAD), and 660-700 (QPKR…EQAT). 2 stretches are compositionally biased toward basic and acidic residues: residues 599-612 (CKTDGRPTDSDRHP) and 675-691 (GEFREPEKGSYSEEERS).

It belongs to the anelloviridae capsid protein family.

It localises to the virion. In terms of biological role, self assemble to form an icosahedral capsid. The polypeptide is Capsid protein (Homo sapiens (Human)).